Reading from the N-terminus, the 197-residue chain is Pyridoxal 5'-phosphate synthase subunit PdxT (197 aa).

52 to 54 (GES) is a binding site for L-glutamine. Cysteine 84 functions as the Nucleophile in the catalytic mechanism. L-glutamine contacts are provided by residues arginine 111 and 139–140 (IR). Catalysis depends on charge relay system residues histidine 175 and glutamate 177.

This sequence belongs to the glutaminase PdxT/SNO family. As to quaternary structure, in the presence of PdxS, forms a dodecamer of heterodimers. Only shows activity in the heterodimer.

It catalyses the reaction aldehydo-D-ribose 5-phosphate + D-glyceraldehyde 3-phosphate + L-glutamine = pyridoxal 5'-phosphate + L-glutamate + phosphate + 3 H2O + H(+). The enzyme catalyses L-glutamine + H2O = L-glutamate + NH4(+). It functions in the pathway cofactor biosynthesis; pyridoxal 5'-phosphate biosynthesis. Its function is as follows. Catalyzes the hydrolysis of glutamine to glutamate and ammonia as part of the biosynthesis of pyridoxal 5'-phosphate. The resulting ammonia molecule is channeled to the active site of PdxS. The protein is Pyridoxal 5'-phosphate synthase subunit PdxT of Halorubrum lacusprofundi (strain ATCC 49239 / DSM 5036 / JCM 8891 / ACAM 34).